The sequence spans 908 residues: MIQNILRVVFGSKFERDLKKLIPIVRQINSLEESIKGMDDSTLSSQTKKFKERIVQGESLDSILPEAFATVREVSLRTMGMRHFDVQMMGGIALHGGNISEMKTGEGKTLTSTLAVYLNSLAGNGVHVVTVNDYLAKRDANWMKPIYDFLGISVGVIQHDMDHEQRKVAYAADITYGTNNEFGFDYLRDNMVSHKDHKVQRSHFFAIVDEVDSILIDEARTPLIISGPSDEATDKYVRVNKIIPKLSEGEDFEVDEKARNVLLTEKGVSHVEEILSIENLYAPENVDLVHHVHQALKAHKIFRVDKDYVVQQGQVVIIDEFTGRPMEGRRYSDGLHQAIEAKENVTIAKESQTLASITFQNYFRMYDKLAGMTGTADTEAEEFKKIYNLDVIVIPPNVSVQRKDSPDRVYRTEKEKFQAILTEIRELQSKKQPVLVGTISIEKSEVLSKMLASAGIQHNVLNAKFHQKEAEIVANAGKPGAVTIATNMAGRGTDIVLGGAQLYKENLETWKDEDEIVKQFKESILRQNLEYAESLMQKMDSGTKQKRASEILSSVKIWKKNHEEVLAAGGLHILGTERHEARRIDNQLRGRSGRQGDPGSSRFYLSLQDDLMRIFGSDRISGLMKWANMPEGQEIESKMVSNAIARAQKRVEGHNFDIRKHLLEYDDVMNRQRIVIYKMRNEVLENEDISPLISGFIEETVENQIVTHCEGNNPSAWNLESLKEWSDGLDLNLQIDEVEFKKSKNPQLSLFEKVSSTAKLKYESKAEKIGKDIWKLLERNIFLDILDHRWKEHLYSMDHLREGIWTVGYSERNPLVEYKLQGFRMFDTAIENLKNEIVNFIFRVEVSENSKLPEEKKEYKKVGQEITGGFQEFSGGNLNRSQSNGSSVTVTTSSGGGTERKTSRRRKR.

ATP contacts are provided by residues Gln87, 105 to 109 (GEGKT), and Asp494. The segment at 871–908 (QEFSGGNLNRSQSNGSSVTVTTSSGGGTERKTSRRRKR) is disordered. Residues 874–884 (SGGNLNRSQSN) are compositionally biased toward polar residues.

It belongs to the SecA family. In terms of assembly, monomer and homodimer. Part of the essential Sec protein translocation apparatus which comprises SecA, SecYEG and auxiliary proteins SecDF. Other proteins may also be involved.

The protein localises to the cell inner membrane. Its subcellular location is the cytoplasm. The catalysed reaction is ATP + H2O + cellular proteinSide 1 = ADP + phosphate + cellular proteinSide 2.. In terms of biological role, part of the Sec protein translocase complex. Interacts with the SecYEG preprotein conducting channel. Has a central role in coupling the hydrolysis of ATP to the transfer of proteins into and across the cell membrane, serving as an ATP-driven molecular motor driving the stepwise translocation of polypeptide chains across the membrane. In Leptospira interrogans serogroup Icterohaemorrhagiae serovar Lai (strain 56601), this protein is Protein translocase subunit SecA.